A 181-amino-acid polypeptide reads, in one-letter code: High mobility group protein B4 (181 aa).

A DNA-binding region (HMG box 1) is located at residues 9-79; it reads PKVNVSSYIH…RYQQEMMNYI (71 aa). The segment covering 80–89 has biased composition (basic residues); that stretch reads GKRRKRRKRD. Residues 80-100 are disordered; sequence GKRRKRRKRDPKAPRKPPSSF. The segment at residues 93–161 is a DNA-binding region (HMG box 2); the sequence is PRKPPSSFLL…KYFEEQEAYR (69 aa).

Belongs to the HMGB family. In terms of tissue distribution, expressed in adult germ cells (at protein level).

It localises to the nucleus. The protein localises to the chromosome. The protein is High mobility group protein B4 (Hmgb4) of Mus musculus (Mouse).